Here is a 504-residue protein sequence, read N- to C-terminus: Pentatricopeptide repeat-containing protein At1g09220, mitochondrial (504 aa).

A mitochondrion-targeting transit peptide spans 1–87 (MFLFSSRRIT…FLFNPLLRCY (87 aa)). PPR repeat units lie at residues 76–110 (KLFLFNPLLRCYSLGETPLHAYFLYDQLQRLHFLS), 120–156 (DSFTYLFLLKASSNPRFPSLLLGIGLHGLTLKLGFES), 157–187 (HVYVQTALVGMYLVGGNMIDAHKVFDEMPER), 188–222 (NPVTWNVMITGLTNLGDFEKALCFLEKMPNRTVVS), 223–253 (WTTIIDGYARVDKPKEAILLFSRMVACDAIK), 255–289 (NEITILAILPAVWNLGDLKMCGSVHAYVGKRGFVP), 291–321 (DIRVTNSLIDAYAKCGCIQSAFKFFIEIPNG), 324–358 (NLVSWTTMISAFAIHGMGKEAVSMFKDMERLGLKP), 359–390 (NRVTMISVLNACSHGGLAEEEFLEFFNTMVNE), and 396–430 (DVKHYGCLVDMLRRKGRLEEAEKIALEIPIEEKAV). The interval 431–504 (VWRMLLGACS…AKLPGHSQVT (74 aa)) is type E motif; degenerate.

It belongs to the PPR family. PCMP-E subfamily.

It localises to the mitochondrion. The polypeptide is Pentatricopeptide repeat-containing protein At1g09220, mitochondrial (PCMP-E25) (Arabidopsis thaliana (Mouse-ear cress)).